Consider the following 277-residue polypeptide: Cis-2,3-dihydrobiphenyl-2,3-diol dehydrogenase (277 aa).

NAD(+) is bound by residues 9-36 (LITGGASGLGRALVDRFVAEGAKVAVLD) and Asp-59. Residue Ser-142 participates in substrate binding. Tyr-155 serves as the catalytic Proton acceptor. Residue Lys-159 participates in NAD(+) binding.

It belongs to the short-chain dehydrogenases/reductases (SDR) family.

It catalyses the reaction (2R,3S)-3-phenylcyclohexa-3,5-diene-1,2-diol + NAD(+) = biphenyl-2,3-diol + NADH + H(+). It participates in xenobiotic degradation; biphenyl degradation; 2-hydroxy-2,4-pentadienoate and benzoate from biphenyl: step 2/4. In Paraburkholderia xenovorans (strain LB400), this protein is Cis-2,3-dihydrobiphenyl-2,3-diol dehydrogenase (bphB).